The primary structure comprises 458 residues: MALWGGRFTQAADQRFKQFNDSLRFDYRLAEQDIVGSVAWSKALVTVGVLTADEQRQLEEALNVLLEEVRANPQQILQSDAEDIHSWVEGKLIDKVGQLGKKLHTGRSRNDQVATDLKLWCKETVRELLTANRQLQSALVETAQANQDAVMPGYTHLQRAQPVTFAHWCLAYVEMLARDESRLQDTLKRLDVSPLGCGALAGTAYEIDREQLAGWLGFTSATRNSLDSVSDRDHVLELLSDAAIGMVHLSRFAEDLIFFNSGEAGFVELSDRVTSGSSLMPQKKNPDALELIRGKCGRVQGALTGMMMTLKGLPLAYNKDMQEDKEGLFDALDTWLDCLHMAALVLDGIQVKRLRCQDAAQQGYANATELADYLVAKGVPFREAHHIVGEAVVEAIRQGKPLEALPLADLQKFSRVIGDDVYPILSLQSCLDKRAAKGGVSPQQVAQAIDDARARLAL.

The protein belongs to the lyase 1 family. Argininosuccinate lyase subfamily.

Its subcellular location is the cytoplasm. The enzyme catalyses 2-(N(omega)-L-arginino)succinate = fumarate + L-arginine. The protein operates within amino-acid biosynthesis; L-arginine biosynthesis; L-arginine from L-ornithine and carbamoyl phosphate: step 3/3. The chain is Argininosuccinate lyase from Salmonella schwarzengrund (strain CVM19633).